The chain runs to 490 residues: Cobyric acid synthase (490 aa).

The GATase cobBQ-type domain occupies 253–440; the sequence is KLRVAAPAAP…LHGVFDEPAA (188 aa). The Nucleophile role is filled by C334. Residue H432 is part of the active site.

It belongs to the CobB/CobQ family. CobQ subfamily.

The protein operates within cofactor biosynthesis; adenosylcobalamin biosynthesis. Catalyzes amidations at positions B, D, E, and G on adenosylcobyrinic A,C-diamide. NH(2) groups are provided by glutamine, and one molecule of ATP is hydrogenolyzed for each amidation. This Chromobacterium violaceum (strain ATCC 12472 / DSM 30191 / JCM 1249 / CCUG 213 / NBRC 12614 / NCIMB 9131 / NCTC 9757 / MK) protein is Cobyric acid synthase.